The sequence spans 268 residues: Ubiquinone biosynthesis protein COQ4 homolog, mitochondrial (268 aa).

4 residues coordinate Zn(2+): H171, D172, H175, and E187.

It belongs to the COQ4 family. In terms of assembly, component of a multi-subunit COQ enzyme complex. It depends on Zn(2+) as a cofactor.

The protein resides in the mitochondrion inner membrane. The catalysed reaction is a 4-hydroxy-3-methoxy-5-(all-trans-polyprenyl)benzoate + H(+) = a 2-methoxy-6-(all-trans-polyprenyl)phenol + CO2. It participates in cofactor biosynthesis; ubiquinone biosynthesis. Functionally, lyase that catalyzes the C1-decarboxylation of 4-hydroxy-3-methoxy-5-(all-trans-polyprenyl)benzoic acid into 2-methoxy-6-(all-trans-polyprenyl)phenol during ubiquinone biosynthesis. The polypeptide is Ubiquinone biosynthesis protein COQ4 homolog, mitochondrial (Drosophila melanogaster (Fruit fly)).